We begin with the raw amino-acid sequence, 395 residues long: S-adenosylmethionine synthase (395 aa).

His19 is an ATP binding site. Asp21 contributes to the Mg(2+) binding site. Glu47 is a K(+) binding site. L-methionine-binding residues include Glu60 and Gln103. Residues 103-113 (QSPDIAQGVNS) are flexible loop. Residues 170-172 (DNK), 236-237 (KF), Asp245, 251-252 (RK), Ala268, and Lys272 contribute to the ATP site. Asp245 contacts L-methionine. Residue Lys276 coordinates L-methionine.

It belongs to the AdoMet synthase family. Homotetramer; dimer of dimers. Requires Mg(2+) as cofactor. The cofactor is K(+).

The protein resides in the cytoplasm. The enzyme catalyses L-methionine + ATP + H2O = S-adenosyl-L-methionine + phosphate + diphosphate. It functions in the pathway amino-acid biosynthesis; S-adenosyl-L-methionine biosynthesis; S-adenosyl-L-methionine from L-methionine: step 1/1. In terms of biological role, catalyzes the formation of S-adenosylmethionine (AdoMet) from methionine and ATP. The overall synthetic reaction is composed of two sequential steps, AdoMet formation and the subsequent tripolyphosphate hydrolysis which occurs prior to release of AdoMet from the enzyme. The polypeptide is S-adenosylmethionine synthase (Rhodopirellula baltica (strain DSM 10527 / NCIMB 13988 / SH1)).